We begin with the raw amino-acid sequence, 313 residues long: Sideroflexin-4 (313 aa).

The next 2 membrane-spanning stretches (helical) occupy residues 87–107 (AAFL…DTGI) and 141–161 (TLLG…PHLF). The residue at position 173 (Lys-173) is an N6-acetyllysine. 3 consecutive transmembrane segments (helical) span residues 175 to 191 (TLPI…NVFA), 230 to 247 (AVLF…IHIF), and 269 to 289 (FFMM…IGQI).

This sequence belongs to the sideroflexin family. As to expression, largely restricted to kidney, brain and heart.

It is found in the mitochondrion inner membrane. Functionally, mitochondrial amino-acid transporter. Does not act as a serine transporter: not able to mediate transport of serine into mitochondria. The chain is Sideroflexin-4 from Mus musculus (Mouse).